We begin with the raw amino-acid sequence, 513 residues long: Lysine--tRNA ligase (513 aa).

Mg(2+)-binding residues include Glu-422 and Glu-429.

It belongs to the class-II aminoacyl-tRNA synthetase family. In terms of assembly, homodimer. Mg(2+) serves as cofactor.

The protein localises to the cytoplasm. The catalysed reaction is tRNA(Lys) + L-lysine + ATP = L-lysyl-tRNA(Lys) + AMP + diphosphate. The protein is Lysine--tRNA ligase of Tolumonas auensis (strain DSM 9187 / NBRC 110442 / TA 4).